The following is a 318-amino-acid chain: Deoxyhypusine hydroxylase (318 aa).

HEAT-like PBS-type repeat units follow at residues leucine 70 to asparagine 96 and valine 103 to glutamate 129. Histidine 72, glutamate 73, histidine 105, glutamate 106, histidine 231, glutamate 232, histidine 264, and glutamate 265 together coordinate Fe cation. One copy of the HEAT-like PBS-type 3 repeat lies at valine 262–aspartate 288.

This sequence belongs to the deoxyhypusine hydroxylase family. Requires Fe(2+) as cofactor.

It localises to the cytoplasm. Its subcellular location is the nucleus. It catalyses the reaction [eIF5A protein]-deoxyhypusine + AH2 + O2 = [eIF5A protein]-hypusine + A + H2O. It functions in the pathway protein modification; eIF5A hypusination. Its function is as follows. Catalyzes the hydroxylation of the N(6)-(4-aminobutyl)-L-lysine intermediate to form hypusine, an essential post-translational modification only found in mature eIF-5A factor. The chain is Deoxyhypusine hydroxylase from Candida albicans (strain SC5314 / ATCC MYA-2876) (Yeast).